Reading from the N-terminus, the 176-residue chain is MDKKSKLINLLKEVGCIRFGEFILASGKKSNYYIDIKKATTNPEILKLVGEIIAEQIKDEDVKVAGVELGSVPIATAVSIIAQKPLLIVRKKPKDYGTKNKIEGELKEGDKVVIVEDVTTTGGSVLKAVKEIRENGGIVDKVFVVVDRLEGAKENLQKENVELIPLVTVKELQSTQ.

5-phospho-alpha-D-ribose 1-diphosphate-binding positions include R90, K91, K94, and 116 to 124 (EDVTTTGGS). Orotate contacts are provided by T120 and R148.

This sequence belongs to the purine/pyrimidine phosphoribosyltransferase family. PyrE subfamily. In terms of assembly, homodimer. Mg(2+) serves as cofactor.

It carries out the reaction orotidine 5'-phosphate + diphosphate = orotate + 5-phospho-alpha-D-ribose 1-diphosphate. It functions in the pathway pyrimidine metabolism; UMP biosynthesis via de novo pathway; UMP from orotate: step 1/2. Its function is as follows. Catalyzes the transfer of a ribosyl phosphate group from 5-phosphoribose 1-diphosphate to orotate, leading to the formation of orotidine monophosphate (OMP). The polypeptide is Orotate phosphoribosyltransferase (Methanocaldococcus jannaschii (strain ATCC 43067 / DSM 2661 / JAL-1 / JCM 10045 / NBRC 100440) (Methanococcus jannaschii)).